The following is a 495-amino-acid chain: ATP synthase subunit beta, chloroplastic (495 aa).

Position 172-179 (172-179) interacts with ATP; that stretch reads GGAGVGKT.

The protein belongs to the ATPase alpha/beta chains family. In terms of assembly, F-type ATPases have 2 components, CF(1) - the catalytic core - and CF(0) - the membrane proton channel. CF(1) has five subunits: alpha(3), beta(3), gamma(1), delta(1), epsilon(1). CF(0) has four main subunits: a(1), b(1), b'(1) and c(9-12).

Its subcellular location is the plastid. It localises to the chloroplast thylakoid membrane. The enzyme catalyses ATP + H2O + 4 H(+)(in) = ADP + phosphate + 5 H(+)(out). Its function is as follows. Produces ATP from ADP in the presence of a proton gradient across the membrane. The catalytic sites are hosted primarily by the beta subunits. This is ATP synthase subunit beta, chloroplastic from Eucomis bicolor (King's flower).